A 99-amino-acid polypeptide reads, in one-letter code: NADH-quinone oxidoreductase subunit K (99 aa).

3 consecutive transmembrane segments (helical) span residues 2–22 (PVEY…LGVL), 28–48 (LILM…FLAF), and 60–80 (IAFF…AVVI).

This sequence belongs to the complex I subunit 4L family. In terms of assembly, NDH-1 is composed of 14 different subunits. Subunits NuoA, H, J, K, L, M, N constitute the membrane sector of the complex.

The protein resides in the cell inner membrane. It carries out the reaction a quinone + NADH + 5 H(+)(in) = a quinol + NAD(+) + 4 H(+)(out). Its function is as follows. NDH-1 shuttles electrons from NADH, via FMN and iron-sulfur (Fe-S) centers, to quinones in the respiratory chain. The immediate electron acceptor for the enzyme in this species is believed to be ubiquinone. Couples the redox reaction to proton translocation (for every two electrons transferred, four hydrogen ions are translocated across the cytoplasmic membrane), and thus conserves the redox energy in a proton gradient. The chain is NADH-quinone oxidoreductase subunit K from Anaeromyxobacter dehalogenans (strain 2CP-1 / ATCC BAA-258).